A 401-amino-acid polypeptide reads, in one-letter code: Phosphoglycerate kinase (401 aa).

Substrate-binding positions include Asp-24–Asn-26, Arg-40, His-63–Arg-66, Arg-122, and Arg-155. ATP-binding positions include Lys-206, Gly-297, Glu-328, and Gly-357 to Ser-360.

It belongs to the phosphoglycerate kinase family. In terms of assembly, monomer.

It is found in the cytoplasm. The enzyme catalyses (2R)-3-phosphoglycerate + ATP = (2R)-3-phospho-glyceroyl phosphate + ADP. It participates in carbohydrate degradation; glycolysis; pyruvate from D-glyceraldehyde 3-phosphate: step 2/5. The protein is Phosphoglycerate kinase of Prochlorococcus marinus (strain NATL2A).